Here is a 203-residue protein sequence, read N- to C-terminus: Shikimate kinase (203 aa).

An ATP-binding site is contributed by 38–43; it reads GAGKST. Ser-42 contributes to the Mg(2+) binding site. Substrate-binding residues include Asp-60, Arg-84, and Gly-106. An ATP-binding site is contributed by Arg-144. A substrate-binding site is contributed by Arg-163.

It belongs to the shikimate kinase family. As to quaternary structure, monomer. The cofactor is Mg(2+).

The protein localises to the cytoplasm. The enzyme catalyses shikimate + ATP = 3-phosphoshikimate + ADP + H(+). It participates in metabolic intermediate biosynthesis; chorismate biosynthesis; chorismate from D-erythrose 4-phosphate and phosphoenolpyruvate: step 5/7. Catalyzes the specific phosphorylation of the 3-hydroxyl group of shikimic acid using ATP as a cosubstrate. In Rhodopseudomonas palustris (strain ATCC BAA-98 / CGA009), this protein is Shikimate kinase.